A 151-amino-acid chain; its full sequence is MTLERTFVAIKPDGVQRGLIAEILGRFETKGFKLVGLKQLTPSKELAEKHYGVHKDRPFFSGLVDFITSGPVIAMVWEGEGVIASARKLIGATKPLEAEPGTIRGDLAVNIGRNVIHGSDGSDTAVFEINLWFQENELVDWNPSDQAWRVE.

Residues lysine 11, phenylalanine 59, arginine 87, threonine 93, arginine 104, and asparagine 114 each coordinate ATP. Histidine 117 (pros-phosphohistidine intermediate) is an active-site residue.

The protein belongs to the NDK family. Homotetramer. It depends on Mg(2+) as a cofactor.

It localises to the cytoplasm. The enzyme catalyses a 2'-deoxyribonucleoside 5'-diphosphate + ATP = a 2'-deoxyribonucleoside 5'-triphosphate + ADP. It catalyses the reaction a ribonucleoside 5'-diphosphate + ATP = a ribonucleoside 5'-triphosphate + ADP. Functionally, major role in the synthesis of nucleoside triphosphates other than ATP. The ATP gamma phosphate is transferred to the NDP beta phosphate via a ping-pong mechanism, using a phosphorylated active-site intermediate. The polypeptide is Nucleoside diphosphate kinase (Prochlorococcus marinus (strain NATL2A)).